The following is an 81-amino-acid chain: Photosystem I iron-sulfur center (81 aa).

2 consecutive 4Fe-4S ferredoxin-type domains span residues 2–31 (AHSV…MIPW) and 39–68 (IASA…VRVY). Residues cysteine 11, cysteine 14, cysteine 17, cysteine 21, cysteine 48, cysteine 51, cysteine 54, and cysteine 58 each contribute to the [4Fe-4S] cluster site.

The eukaryotic PSI reaction center is composed of at least 11 subunits. [4Fe-4S] cluster is required as a cofactor.

The protein resides in the plastid. Its subcellular location is the chloroplast thylakoid membrane. The catalysed reaction is reduced [plastocyanin] + hnu + oxidized [2Fe-2S]-[ferredoxin] = oxidized [plastocyanin] + reduced [2Fe-2S]-[ferredoxin]. Apoprotein for the two 4Fe-4S centers FA and FB of photosystem I (PSI); essential for photochemical activity. FB is the terminal electron acceptor of PSI, donating electrons to ferredoxin. The C-terminus interacts with PsaA/B/D and helps assemble the protein into the PSI complex. Required for binding of PsaD and PsaE to PSI. PSI is a plastocyanin-ferredoxin oxidoreductase, converting photonic excitation into a charge separation, which transfers an electron from the donor P700 chlorophyll pair to the spectroscopically characterized acceptors A0, A1, FX, FA and FB in turn. The polypeptide is Photosystem I iron-sulfur center (Cycas taitungensis (Prince sago)).